A 1264-amino-acid polypeptide reads, in one-letter code: Box A-binding factor (1264 aa).

Residues 1-11 are compositionally biased toward basic and acidic residues; sequence MTKTTKPKEKA. 6 disordered regions span residues 1–25, 161–200, 234–253, 405–463, 523–585, and 599–627; these read MTKT…SGLG, TASD…ESVK, LISH…QHQQ, QLHQ…HALS, NQTQ…SAAT, and HNSS…PAFQ. Positions 16–25 are enriched in gly residues; that stretch reads AVIGSGSGLG. Low complexity predominate over residues 161–171; sequence TASDTAATSEA. Polar residues predominate over residues 189–198; the sequence is SKAQNDASES. Residues 409-421 are compositionally biased toward basic residues; the sequence is QQHHHQQQLHHHQ. Low complexity-rich tracts occupy residues 422-438, 447-459, and 523-554; these read QQQQ…QQQQ, STSS…PSSS, and NQTQ…QQQQ. Positions 555–564 are enriched in basic residues; the sequence is QHHHNQHQHH. Composition is skewed to low complexity over residues 565-585 and 599-614; these read NSSS…SAAT and HNSS…RSSH. The segment at 803–827 adopts a GATA-type zinc-finger fold; the sequence is CSNCHTTHTSLWRRNPAGEPVCNAC. Disordered regions lie at residues 841 to 867, 899 to 1048, and 1181 to 1202; these read TMKK…SKSK, DDMK…SNEN, and EEMD…QHGE. Composition is skewed to low complexity over residues 909-950 and 985-1007; these read PYNS…GSTS and QMSP…HSPS. Residues 1008-1023 are compositionally biased toward polar residues; the sequence is TPTSIFNTPSPTHQLH. Low complexity-rich tracts occupy residues 1024-1048 and 1185-1200; these read NNNN…SNEN and QSQQ…QQQH. A phosphoserine mark is found at serine 1208 and serine 1210.

As to quaternary structure, interacts (via GATA-type Zn-finger domain) with Bfc; this interaction enhances srp binding to the promoter of crq/croquemort.

It is found in the nucleus. Its function is as follows. May function as a transcriptional activator protein and may play a key role in the organogenesis of the fat body. Binds a sequence element (5'-[TA]GATAA-3') found in the larval promoters of all known alcohol dehydrogenase (ADH) genes. Acts as a homeotic gene downstream of the terminal gap gene HKB to promote morphogenesis and differentiation of anterior and posterior midgut. Together with transcriptional cofactor Bfc directly binds the promoter of phagocytic receptor crq/croquemort to upregulate its expression and stimulate efferocytosis in response to apoptotic cells, including during embryogenesis. This is Box A-binding factor (srp) from Drosophila melanogaster (Fruit fly).